The following is a 120-amino-acid chain: Acyl carrier protein, mitochondrial (120 aa).

A Carrier domain is found at 43 to 117 (KEITDRVIGV…ETISYLRKTP (75 aa)). Serine 77 bears the O-(pantetheine 4'-phosphoryl)serine mark.

This sequence belongs to the acyl carrier protein (ACP) family. In terms of assembly, complex I is composed of about 45 different subunits. Post-translationally, 4'-phosphopantetheine is transferred from CoA to a specific serine of apo-ACP by acpS. This modification is essential for activity because fatty acids are bound in thioester linkage to the sulfhydryl of the prosthetic group.

It localises to the mitochondrion. Its pathway is lipid metabolism; fatty acid biosynthesis. Functionally, carrier of the growing fatty acid chain in fatty acid biosynthesis. May be involved in the synthesis of very-long-chain fatty acids. Accessory and non-catalytic subunit of the mitochondrial membrane respiratory chain NADH dehydrogenase (Complex I), which functions in the transfer of electrons from NADH to the respiratory chain. The chain is Acyl carrier protein, mitochondrial (ndufab1) from Dictyostelium discoideum (Social amoeba).